The chain runs to 152 residues: Deoxyuridine 5'-triphosphate nucleotidohydrolase (152 aa).

Residues 72–74 (RSG), Asn85, and 89–91 (TID) contribute to the substrate site.

Belongs to the dUTPase family. Mg(2+) is required as a cofactor.

It catalyses the reaction dUTP + H2O = dUMP + diphosphate + H(+). The protein operates within pyrimidine metabolism; dUMP biosynthesis; dUMP from dCTP (dUTP route): step 2/2. This enzyme is involved in nucleotide metabolism: it produces dUMP, the immediate precursor of thymidine nucleotides and it decreases the intracellular concentration of dUTP so that uracil cannot be incorporated into DNA. This Rhodopseudomonas palustris (strain BisB5) protein is Deoxyuridine 5'-triphosphate nucleotidohydrolase.